A 354-amino-acid chain; its full sequence is Lipoyl synthase, mitochondrial (354 aa).

The [4Fe-4S] cluster site is built by C91, C96, C102, C122, C126, C129, and S337. In terms of domain architecture, Radical SAM core spans 107 to 326 (DDSLATATIM…AEYSKKLGFL (220 aa)).

It belongs to the radical SAM superfamily. Lipoyl synthase family. [4Fe-4S] cluster is required as a cofactor.

It localises to the mitochondrion. It catalyses the reaction [[Fe-S] cluster scaffold protein carrying a second [4Fe-4S](2+) cluster] + N(6)-octanoyl-L-lysyl-[protein] + 2 oxidized [2Fe-2S]-[ferredoxin] + 2 S-adenosyl-L-methionine + 4 H(+) = [[Fe-S] cluster scaffold protein] + N(6)-[(R)-dihydrolipoyl]-L-lysyl-[protein] + 4 Fe(3+) + 2 hydrogen sulfide + 2 5'-deoxyadenosine + 2 L-methionine + 2 reduced [2Fe-2S]-[ferredoxin]. Its pathway is protein modification; protein lipoylation via endogenous pathway; protein N(6)-(lipoyl)lysine from octanoyl-[acyl-carrier-protein]: step 2/2. Catalyzes the radical-mediated insertion of two sulfur atoms into the C-6 and C-8 positions of the octanoyl moiety bound to the lipoyl domains of lipoate-dependent enzymes, thereby converting the octanoylated domains into lipoylated derivatives. In Caenorhabditis elegans, this protein is Lipoyl synthase, mitochondrial.